Reading from the N-terminus, the 236-residue chain is 2-C-methyl-D-erythritol 4-phosphate cytidylyltransferase (236 aa).

This sequence belongs to the IspD/TarI cytidylyltransferase family. IspD subfamily.

The enzyme catalyses 2-C-methyl-D-erythritol 4-phosphate + CTP + H(+) = 4-CDP-2-C-methyl-D-erythritol + diphosphate. The protein operates within isoprenoid biosynthesis; isopentenyl diphosphate biosynthesis via DXP pathway; isopentenyl diphosphate from 1-deoxy-D-xylulose 5-phosphate: step 2/6. In terms of biological role, catalyzes the formation of 4-diphosphocytidyl-2-C-methyl-D-erythritol from CTP and 2-C-methyl-D-erythritol 4-phosphate (MEP). The sequence is that of 2-C-methyl-D-erythritol 4-phosphate cytidylyltransferase from Burkholderia orbicola (strain AU 1054).